We begin with the raw amino-acid sequence, 1798 residues long: Non-reducing polyketide synthase nscA (1798 aa).

An N-terminal acylcarrier protein transacylase domain (SAT) region spans residues 25 to 256 (RRLDQHSKDR…PLPVYDGLCH (232 aa)). Residues 392–825 (SSKLAIVGMA…GGNTTLLLED (434 aa)) form the Ketosynthase family 3 (KS3) domain. A disordered region spans residues 436–455 (NTHYDPTGKTENTTQTPYGN). A compositionally biased stretch (polar residues) spans 444–453 (KTENTTQTPY). Active-site for beta-ketoacyl synthase activity residues include cysteine 565, histidine 700, and histidine 743. The tract at residues 931–1230 (FTGQGAYYHG…PSASAMSSCR (300 aa)) is malonyl-CoA:ACP transacylase (MAT) domain. Residues 1322–1458 (HQITAETVEA…AMIRFEDPVA (137 aa)) are N-terminal hotdog fold. One can recognise a PKS/mFAS DH domain in the interval 1322–1632 (HQITAETVEA…FRRVPRLLMD (311 aa)). The active-site Proton acceptor; for dehydratase activity is the histidine 1354. Residues 1390–1628 (HMNLTDVEVL…GMIRFRRVPR (239 aa)) form a product template (PT) domain region. Residues 1486-1632 (ASRLSKPLAY…FRRVPRLLMD (147 aa)) form a C-terminal hotdog fold region. Aspartate 1543 functions as the Proton donor; for dehydratase activity in the catalytic mechanism. The tract at residues 1685 to 1719 (MASKAPEPAPLLATSSESSTPKESPIVTPAESERA) is disordered. Residues 1698 to 1709 (TSSESSTPKESP) are compositionally biased toward low complexity. A Carrier domain is found at 1721 to 1798 (PVDNNMISQC…EMTAWIEEYC (78 aa)). O-(pantetheine 4'-phosphoryl)serine is present on serine 1758.

Pantetheine 4'-phosphate is required as a cofactor.

It functions in the pathway secondary metabolite biosynthesis. Non-reducing polyketide synthase; part of the gene cluster that mediates the biosynthesis of neosartoricin B, a prenylated anthracenone that probably exhibits T-cell antiproliferative activity, suggestive of a physiological role as an immunosuppressive agent. The non-reducing polyketide synthase nscA probably synthesizes and cyclizes the decaketide backbone. The hydrolase nscB then mediates the product release through hydrolysis followed by spontaneous decarboxylation. The prenyltransferase nscD catalyzes the addition of the dimethylallyl group to the aromatic C5. The FAD-dependent monooxygenase nscC is then responsible for the stereospecific hydroxylation at C2. Neosartoricin B can be converted into two additional compounds neosartoricins C and D. Neosartoricin C is a spirocyclic compound that is cyclized through the attack of C3 hydroxyl on C14, followed by dehydration. On the other hand, neosartoricin D is a further cyclized compound in which attack of C2 on C14 in neosartoricin C results in the formation of the acetal-containing dioxabicyclo-octanone ring. Both of these compounds are novel and possibly represent related metabolites of the gene cluster. The sequence is that of Non-reducing polyketide synthase nscA from Arthroderma benhamiae (strain ATCC MYA-4681 / CBS 112371) (Trichophyton mentagrophytes).